The sequence spans 41 residues: Protein UL21 homolog (41 aa).

This sequence belongs to the herpesviridae UL21 family.

The chain is Protein UL21 homolog from Equine herpesvirus 4 (strain 1942) (EHV-4).